Reading from the N-terminus, the 562-residue chain is SLAIN motif-containing protein-like (562 aa).

Disordered stretches follow at residues Gln-292–Leu-313, His-344–His-381, and Ser-409–Tyr-562. Low complexity-rich tracts occupy residues Ala-295–His-311 and Arg-345–Arg-355. Polar residues-rich tracts occupy residues Cys-356–Arg-370, Gln-424–Pro-442, Val-465–Pro-531, and Ser-539–Gly-553.

The protein belongs to the SLAIN motif-containing family.

The sequence is that of SLAIN motif-containing protein-like from Xenopus laevis (African clawed frog).